The primary structure comprises 430 residues: Trigger factor (430 aa).

The PPIase FKBP-type domain maps to 164-249; the sequence is DDWAVIDHEG…LKALKTRQLP (86 aa).

Belongs to the FKBP-type PPIase family. Tig subfamily.

The protein resides in the cytoplasm. The enzyme catalyses [protein]-peptidylproline (omega=180) = [protein]-peptidylproline (omega=0). Its function is as follows. Involved in protein export. Acts as a chaperone by maintaining the newly synthesized protein in an open conformation. Functions as a peptidyl-prolyl cis-trans isomerase. The protein is Trigger factor of Anaeromyxobacter sp. (strain Fw109-5).